A 210-amino-acid chain; its full sequence is Ion-translocating oxidoreductase complex subunit G (210 aa).

A helical transmembrane segment spans residues 9–29 (GVTLAVFAAITTGLTAVINAV). T175 bears the FMN phosphoryl threonine mark.

Belongs to the RnfG family. In terms of assembly, the complex is composed of six subunits: RnfA, RnfB, RnfC, RnfD, RnfE and RnfG. FMN is required as a cofactor.

Its subcellular location is the cell inner membrane. Its function is as follows. Part of a membrane-bound complex that couples electron transfer with translocation of ions across the membrane. The chain is Ion-translocating oxidoreductase complex subunit G from Erwinia tasmaniensis (strain DSM 17950 / CFBP 7177 / CIP 109463 / NCPPB 4357 / Et1/99).